Consider the following 218-residue polypeptide: Small ribosomal subunit protein uS3c (218 aa).

The 72-residue stretch at 47–118 (VQKNIRISSG…KLNIAITRIS (72 aa)) folds into the KH type-2 domain.

The protein belongs to the universal ribosomal protein uS3 family. In terms of assembly, part of the 30S ribosomal subunit.

It is found in the plastid. It localises to the chloroplast. This Crucihimalaya wallichii (Rock-cress) protein is Small ribosomal subunit protein uS3c (rps3).